The primary structure comprises 294 residues: Ribosomal RNA small subunit methyltransferase H (294 aa).

Residues 37–39 (GGH), Asp58, Leu93, Asp105, and Gln112 each bind S-adenosyl-L-methionine.

The protein belongs to the methyltransferase superfamily. RsmH family.

The protein resides in the cytoplasm. The enzyme catalyses cytidine(1402) in 16S rRNA + S-adenosyl-L-methionine = N(4)-methylcytidine(1402) in 16S rRNA + S-adenosyl-L-homocysteine + H(+). In terms of biological role, specifically methylates the N4 position of cytidine in position 1402 (C1402) of 16S rRNA. This chain is Ribosomal RNA small subunit methyltransferase H, found in Fervidobacterium nodosum (strain ATCC 35602 / DSM 5306 / Rt17-B1).